Here is a 199-residue protein sequence, read N- to C-terminus: MFTQKSFEIFKIEGLEPRMTEIRSEIQPVFSEIGQKLLTELSVKIPNQEFYFHIAQHRRRTANAPENTWSAISTKVRGYKMEAHFQLGIWEDYVFIYLSMIDQPKKQKEYANLLTSLSVEKLLTEDFVISKDHTKAETYPLSAFREAAERLGKVKKSELEIGRVWPKERFNSKEDSIILAEMIETIDQLLPIYQKLMEV.

It belongs to the UPF0637 family.

This Lactococcus lactis subsp. lactis (strain IL1403) (Streptococcus lactis) protein is UPF0637 protein YsbB (ysbB).